A 481-amino-acid chain; its full sequence is Proline--tRNA ligase (481 aa).

This sequence belongs to the class-II aminoacyl-tRNA synthetase family. ProS type 3 subfamily. As to quaternary structure, homodimer.

It is found in the cytoplasm. It catalyses the reaction tRNA(Pro) + L-proline + ATP = L-prolyl-tRNA(Pro) + AMP + diphosphate. Its function is as follows. Catalyzes the attachment of proline to tRNA(Pro) in a two-step reaction: proline is first activated by ATP to form Pro-AMP and then transferred to the acceptor end of tRNA(Pro). The sequence is that of Proline--tRNA ligase from Prosthecochloris aestuarii (strain DSM 271 / SK 413).